The primary structure comprises 596 residues: Beta-fructofuranosidase, insoluble isoenzyme 7 (596 aa).

The N-terminal stretch at methionine 1–serine 24 is a signal peptide. Residues tryptophan 51 to aspartate 54, glutamine 70, and tryptophan 78 contribute to the substrate site. The active site involves aspartate 54. A glycan (N-linked (GlcNAc...) asparagine) is linked at asparagine 82. Substrate-binding positions include tryptophan 115–serine 116, arginine 179–aspartate 180, and glutamate 234. A glycan (N-linked (GlcNAc...) asparagine) is linked at asparagine 330. Residues cysteine 432 and cysteine 478 are joined by a disulfide bond. Asparagine 552 carries an N-linked (GlcNAc...) asparagine glycan.

This sequence belongs to the glycosyl hydrolase 32 family. As to expression, expressed in roots, leaves and flowers. Weakly expressed in seeds.

The protein localises to the secreted. It localises to the extracellular space. Its subcellular location is the apoplast. The protein resides in the cell wall. The enzyme catalyses Hydrolysis of terminal non-reducing beta-D-fructofuranoside residues in beta-D-fructofuranosides.. May play a role in sucrose partitioning during seed development. This Oryza sativa subsp. japonica (Rice) protein is Beta-fructofuranosidase, insoluble isoenzyme 7 (CIN7).